An 881-amino-acid chain; its full sequence is Glutamate--tRNA ligase (881 aa).

Residues 1–480 are glutamyl-tRNA synthetase; that stretch reads MSVRVRLAPS…ILRFKKSIGQ (480 aa). Positions 9 to 19 match the 'HIGH' region motif; it reads PSPTGNLHIGT. Residues 248–252 carry the 'KMSKS' region motif; the sequence is KLSKR. Lys251 is a binding site for ATP. Residues 481–881 form a unknown region; the sequence is EIEDTKIEDT…IKREIFGKPS (401 aa). A compositionally biased stretch (basic and acidic residues) spans 488-502; the sequence is EDTKKAETTPHKSKG. A disordered region spans residues 488–747; sequence EDTKKAETTP…PTATDAETRE (260 aa). Over residues 522–548 the composition is skewed to low complexity; the sequence is QTQTTKPPKKGQTATPVATTPTATDVT. Residues 549–562 are compositionally biased toward polar residues; sequence ENTSVGTQETQSQI. Low complexity predominate over residues 563–576; sequence TTPVATTPTATDVT. Over residues 577–590 the composition is skewed to polar residues; the sequence is ENTSVGTQETQSQI. A compositionally biased stretch (low complexity) spans 591-604; sequence TTPVATTPTATDVT. Polar residues predominate over residues 605-618; the sequence is ENTSVETQETQSQI. The span at 619-632 shows a compositional bias: low complexity; that stretch reads TTPVATTPTATDVT. Residues 633-646 are compositionally biased toward polar residues; it reads ENTSVETQETQSQI. Positions 647–660 are enriched in low complexity; it reads TTPVATTPTATDVT. The segment covering 661–674 has biased composition (polar residues); it reads ENTSVGTQETQSQI. Positions 675-688 are enriched in low complexity; sequence TTPVATTPTATDVT. Positions 689–702 are enriched in polar residues; sequence ENTSVETQETQSQI. The segment covering 703–720 has biased composition (low complexity); that stretch reads TTPVATTSTATDVTENTS. The segment covering 721-730 has biased composition (polar residues); sequence VETQETQSQI. The segment covering 731-742 has biased composition (low complexity); the sequence is TTPVATTPTATD. The next 2 helical transmembrane spans lie at 809-829 and 832-852; these read LFGW…VIEA and GIPI…VWFV.

The protein belongs to the class-I aminoacyl-tRNA synthetase family. Glutamate--tRNA ligase type 1 subfamily. Monomer.

The protein resides in the cytoplasm. Its subcellular location is the cell membrane. The enzyme catalyses tRNA(Glu) + L-glutamate + ATP = L-glutamyl-tRNA(Glu) + AMP + diphosphate. In terms of biological role, catalyzes the attachment of glutamate to tRNA(Glu) in a two-step reaction: glutamate is first activated by ATP to form Glu-AMP and then transferred to the acceptor end of tRNA(Glu). This is Glutamate--tRNA ligase (gltX) from Trichodesmium erythraeum (strain IMS101).